We begin with the raw amino-acid sequence, 118 residues long: Large ribosomal subunit protein uL24 (118 aa).

This sequence belongs to the universal ribosomal protein uL24 family. In terms of assembly, part of the 50S ribosomal subunit.

Functionally, one of two assembly initiator proteins, it binds directly to the 5'-end of the 23S rRNA, where it nucleates assembly of the 50S subunit. In terms of biological role, one of the proteins that surrounds the polypeptide exit tunnel on the outside of the subunit. The chain is Large ribosomal subunit protein uL24 from Prochlorococcus marinus (strain MIT 9301).